Reading from the N-terminus, the 130-residue chain is Annexin A1 (130 aa).

Residue Gln19 forms an Isoglutamyl lysine isopeptide (Gln-Lys) (interchain with K-?) linkage. A Phosphoserine; by PKC modification is found at Ser24. Annexin repeat units follow at residues 37-108 and 109-130; these read FDPS…ALLK and TPAQFDAEELRASMKGLGTDRR. Ca(2+) contacts are provided by Gly54, Val55, Glu57, Lys92, Leu95, Glu100, Met122, Gly124, Gly126, Thr127, and Arg130.

Belongs to the annexin family.

It localises to the nucleus. It is found in the cytoplasm. The protein localises to the cell projection. The protein resides in the cilium. Its subcellular location is the basolateral cell membrane. It localises to the lateral cell membrane. It is found in the cell membrane. The protein localises to the apical cell membrane. The protein resides in the membrane. Its subcellular location is the early endosome. It localises to the cytoplasmic vesicle membrane. It is found in the endosome membrane. The protein localises to the secreted. The protein resides in the extracellular space. Its subcellular location is the extracellular exosome. It localises to the cytoplasmic vesicle. It is found in the secretory vesicle lumen. The protein localises to the phagocytic cup. Its function is as follows. Plays important roles in the innate immune response as effector of glucocorticoid-mediated responses and regulator of the inflammatory process. Has anti-inflammatory activity. Plays a role in glucocorticoid-mediated down-regulation of the early phase of the inflammatory response. Promotes resolution of inflammation and wound healing. Functions at least in part by activating the formyl peptide receptors and downstream signaling cascades. Promotes chemotaxis of granulocytes and monocytes via activation of the formyl peptide receptors. Contributes to the adaptive immune response by enhancing signaling cascades that are triggered by T-cell activation, regulates differentiation and proliferation of activated T-cells. Promotes the differentiation of T-cells into Th1 cells and negatively regulates differentiation into Th2 cells. Has no effect on unstimulated T-cells. Promotes rearrangement of the actin cytoskeleton, cell polarization and cell migration. Negatively regulates hormone exocytosis via activation of the formyl peptide receptors and reorganization of the actin cytoskeleton. Has high affinity for Ca(2+) and can bind up to eight Ca(2+) ions. Displays Ca(2+)-dependent binding to phospholipid membranes. Plays a role in the formation of phagocytic cups and phagosomes. Plays a role in phagocytosis by mediating the Ca(2+)-dependent interaction between phagosomes and the actin cytoskeleton. This is Annexin A1 (ANXA1) from Gallus gallus (Chicken).